The following is an 857-amino-acid chain: uncharacterized protein (857 aa).

Disordered regions lie at residues 316–339 (PPAP…TKEN), 484–561 (AKQP…PRTN), 619–777 (GQFP…PKPQ), and 809–836 (EQRP…STGK). 3 stretches are compositionally biased toward basic and acidic residues: residues 324–339 (PENK…TKEN), 518–534 (KKTE…KAEE), and 630–640 (QRAESSIDKDC). Polar residues predominate over residues 683–700 (RTTTVQPHSHSAQPTTLR). Positions 708-725 (SSSLIASAKPAPPISSSS) are enriched in low complexity. Over residues 726–738 (TGPNVTNPNQSSA) the composition is skewed to polar residues. The span at 809–828 (EQRPEREAMKRQAQQERENA) shows a compositional bias: basic and acidic residues.

This is an uncharacterized protein from Mus musculus (Mouse).